The primary structure comprises 198 residues: Recombination protein RecR (198 aa).

A C4-type zinc finger spans residues 57 to 72; the sequence is CQRCNTFSEAELCAIC. A Toprim domain is found at 80-175; the sequence is DQLCIVEMPA…TVTRIARGMP (96 aa).

It belongs to the RecR family.

May play a role in DNA repair. It seems to be involved in an RecBC-independent recombinational process of DNA repair. It may act with RecF and RecO. This chain is Recombination protein RecR, found in Chromobacterium violaceum (strain ATCC 12472 / DSM 30191 / JCM 1249 / CCUG 213 / NBRC 12614 / NCIMB 9131 / NCTC 9757 / MK).